A 188-amino-acid chain; its full sequence is Ribosome maturation factor RimP (188 aa).

It belongs to the RimP family.

The protein resides in the cytoplasm. Required for maturation of 30S ribosomal subunits. The chain is Ribosome maturation factor RimP from Erythrobacter litoralis (strain HTCC2594).